The sequence spans 206 residues: Protein GET1 (206 aa).

At 1–4 (MPSL) the chain is on the lumenal side. Residues 5-24 (LITVLFLNVIIYVVNTVGAA) form a helical membrane-spanning segment. Topologically, residues 25–110 (TVDGLLWLLY…TFDMTIKIAR (86 aa)) are cytoplasmic. A coiled-coil region spans residues 75-100 (AKLRRRHDKALEAYEAKNNELTQSKS). A helical membrane pass occupies residues 111 to 131 (WAATSGLMLFLQFWYSKTPIF). Topologically, residues 132 to 155 (TLPPGWIPWQVQWVLSFPRAPMGT) are lumenal. A helical membrane pass occupies residues 156–172 (VSIQIWGGACATVVALV). Residues 173–206 (GDAMKASLAYVSKPKIDRIKLGATMEGKEGKKRQ) lie on the Cytoplasmic side of the membrane.

This sequence belongs to the WRB/GET1 family. Interacts with GET3.

Its subcellular location is the endoplasmic reticulum membrane. In terms of biological role, required for the post-translational delivery of tail-anchored (TA) proteins to the endoplasmic reticulum. Acts as a membrane receptor for soluble GET3, which recognizes and selectively binds the transmembrane domain of TA proteins in the cytosol. This is Protein GET1 from Ajellomyces capsulatus (strain G186AR / H82 / ATCC MYA-2454 / RMSCC 2432) (Darling's disease fungus).